An 85-amino-acid polypeptide reads, in one-letter code: U4-theraphotoxin-Hhn1a (85 aa).

Residues 1 to 22 form the signal peptide; sequence MKMTLIAILTCAAVLVLHTTAA. The propeptide occupies 23–48; sequence EELEAESQLMEVGMPDTELAAVDEER. 3 disulfides stabilise this stretch: cysteine 52–cysteine 66, cysteine 56–cysteine 77, and cysteine 71–cysteine 82.

This sequence belongs to the neurotoxin 12 (Hwtx-2) family. 02 (Hwtx-2) subfamily. In terms of assembly, monomer. Expressed by the venom gland.

It is found in the secreted. In terms of biological role, neurotoxin active on both insects and mammals. The polypeptide is U4-theraphotoxin-Hhn1a (Cyriopagopus hainanus (Chinese bird spider)).